A 294-amino-acid chain; its full sequence is Phosphoribosylaminoimidazole-succinocarboxamide synthase (294 aa).

This sequence belongs to the SAICAR synthetase family.

It catalyses the reaction 5-amino-1-(5-phospho-D-ribosyl)imidazole-4-carboxylate + L-aspartate + ATP = (2S)-2-[5-amino-1-(5-phospho-beta-D-ribosyl)imidazole-4-carboxamido]succinate + ADP + phosphate + 2 H(+). It participates in purine metabolism; IMP biosynthesis via de novo pathway; 5-amino-1-(5-phospho-D-ribosyl)imidazole-4-carboxamide from 5-amino-1-(5-phospho-D-ribosyl)imidazole-4-carboxylate: step 1/2. The protein is Phosphoribosylaminoimidazole-succinocarboxamide synthase of Thermoplasma acidophilum (strain ATCC 25905 / DSM 1728 / JCM 9062 / NBRC 15155 / AMRC-C165).